A 335-amino-acid polypeptide reads, in one-letter code: E3 ubiquitin ligase rnf-121 (335 aa).

Over 1–47 (MGQHGAIRLQNEVQEGMPPPHELTEEEQWAEEHRKMHEKHKGHEAMH) the chain is Cytoplasmic. Residues 48 to 68 (MEMMVIFMISVIVGQIFLVTW) form a helical membrane-spanning segment. At 69–72 (KRKH) the chain is on the lumenal side. The chain crosses the membrane as a helical span at residues 73–93 (FKSYQMCTLIGMLTIPVYVCF). At 94–99 (NRSWYR) the chain is on the cytoplasmic side. The helical transmembrane segment at 100 to 120 (FLATWLVFCIFSAFIWLKASA) threads the bilayer. The Lumenal portion of the chain corresponds to 121–143 (QHISGGTPRFVYKWFLFLHKLSY). A helical transmembrane segment spans residues 144–164 (VLGVVGYLIMMGALLGFHVLF). The Cytoplasmic segment spans residues 165 to 168 (GVSQ). The helical transmembrane segment at 169–189 (PTLMDAGILFMFYGVYYGVLG) threads the bilayer. At 190–335 (RDFAHICTAR…QGLTTWMGLE (146 aa)) the chain is on the lumenal side. Residues 222–284 (CAVCGGRLDD…GKLQTCPYCK (63 aa)) form an RING-type; atypical zinc finger.

This sequence belongs to the RNF121 family. In terms of tissue distribution, expressed in body wall muscles, the hypodermis, seam cells, vulval cells, spermathecal cells, uterine cells and the distal tip cell (at protein level).

It is found in the endoplasmic reticulum membrane. The protein resides in the golgi apparatus membrane. It carries out the reaction S-ubiquitinyl-[E2 ubiquitin-conjugating enzyme]-L-cysteine + [acceptor protein]-L-lysine = [E2 ubiquitin-conjugating enzyme]-L-cysteine + N(6)-ubiquitinyl-[acceptor protein]-L-lysine.. Its pathway is protein modification; protein ubiquitination. Its function is as follows. E3 ubiquitin ligase which accepts ubiquitin and transfers it to substrates such as the beta-integrin subunit pat-3, promoting their degradation by the endoplasmic reticulum-associated degradation (ERAD) pathway which is a pathway involved in ubiquitin-dependent degradation of misfolded endoplasmic reticulum proteins. Negatively regulates the unfolded protein response to reduce endoplasmic reticulum stress. Required for the cessation of distal tip cell migration at the end of larval morphogenesis. Plays a role in germline and gonad development. This chain is E3 ubiquitin ligase rnf-121, found in Caenorhabditis elegans.